The chain runs to 428 residues: Adenylosuccinate synthetase (428 aa).

GTP is bound by residues 12–18 and 40–42; these read GDEGKGK and GHS. Asp-13 functions as the Proton acceptor in the catalytic mechanism. 2 residues coordinate Mg(2+): Asp-13 and Gly-40. IMP contacts are provided by residues 13–16, 38–41, Thr-128, Arg-142, Gln-223, Thr-238, and Arg-302; these read DEGK and NAGH. His-41 functions as the Proton donor in the catalytic mechanism. Substrate is bound at residue 298–304; it reads VTTGRPR. GTP is bound by residues Arg-304, 330–332, and 412–414; these read KLD and GTG.

Belongs to the adenylosuccinate synthetase family. As to quaternary structure, homodimer. Mg(2+) serves as cofactor.

Its subcellular location is the cytoplasm. It catalyses the reaction IMP + L-aspartate + GTP = N(6)-(1,2-dicarboxyethyl)-AMP + GDP + phosphate + 2 H(+). It participates in purine metabolism; AMP biosynthesis via de novo pathway; AMP from IMP: step 1/2. Plays an important role in the de novo pathway of purine nucleotide biosynthesis. Catalyzes the first committed step in the biosynthesis of AMP from IMP. The polypeptide is Adenylosuccinate synthetase (Bifidobacterium longum (strain DJO10A)).